The primary structure comprises 267 residues: Putative F-box protein At5g38810 (267 aa).

Residues 4-53 (RKTFDSIPDDLFVEIALRLSSKSIARCRCVSKLWASILYRQDFTELFITK) form the F-box domain.

This is Putative F-box protein At5g38810 from Arabidopsis thaliana (Mouse-ear cress).